The sequence spans 89 residues: Large ribosomal subunit protein bL27 (89 aa).

The segment at 1-26 (MAQKKAGGSSRNGRDSVGQRRGVKRF) is disordered.

The protein belongs to the bacterial ribosomal protein bL27 family.

This Desulfovibrio desulfuricans (strain ATCC 27774 / DSM 6949 / MB) protein is Large ribosomal subunit protein bL27.